The following is a 389-amino-acid chain: GKMLAAVSRVLSGVAQKPASRVLVASRTFANDATFEIKKCDLHRLEEGPPVTTVLTREDGLKYYRMMQTVRRMELKADQLYKQKIIRGFCHLCDGQEACCVGLEAGINPTDHLITAYRAHGFTFTRGLSVREILAELTGRRGGCGKGKGGSMHMYAKNFYGGNGIVGAQVPLGAGIALACKYNGKDEVCLTLYGDGAANQGQIFEAYNMAALWKLPCVFICENNRYGMGTSVERAAASTDYYKRGDFIPGLRVDGMDILCVREATRFAAAYCRSGKGPILMELQTYRYHGHSMSDPGVSYRTREEIQEVRSKSDPIMLLKDRMVNSNLASVEELKEIDVEVRKEIEDAAQFATADPEPPLEELGYHIYCNDPPFEVRGANQWIKFKSIS.

Residues 1–28 (GKMLAAVSRVLSGVAQKPASRVLVASRT) constitute a mitochondrion transit peptide. N6-acetyllysine; alternate is present on Lys-62. Residue Lys-62 is modified to N6-succinyllysine; alternate. Pyruvate contacts are provided by His-91, Tyr-117, Arg-118, Ala-156, Gly-164, Val-166, Asp-195, Gly-196, Ala-197, Asn-224, and Tyr-226. Residues Tyr-117 and Arg-118 each coordinate thiamine diphosphate. Gly-164, Val-166, Asp-195, Gly-196, Ala-197, and Asn-224 together coordinate thiamine diphosphate. Asp-195 is a binding site for Mg(2+). Asn-224 and Tyr-226 together coordinate Mg(2+). Ser-231 is subject to Phosphoserine; by PDK1. Lys-243 is modified (N6-acetyllysine; alternate). N6-succinyllysine; alternate is present on Lys-243. Lys-276 bears the N6-succinyllysine mark. His-291 serves as a coordination point for thiamine diphosphate. Phosphoserine; by PDK1, PDK2, PDK3 and PDK4 is present on Ser-292. Ser-294 carries the post-translational modification Phosphoserine. Ser-299 carries the phosphoserine; by PDK1, PDK2, PDK3 and PDK4 modification. Tyr-300 bears the Phosphotyrosine mark. Lys-312 is subject to N6-acetyllysine; alternate. The residue at position 312 (Lys-312) is an N6-succinyllysine; alternate. 2 positions are modified to N6-acetyllysine: Lys-320 and Lys-335. Lys-384 bears the N6-succinyllysine mark.

Heterotetramer of two PDHA1 and two PDHB subunits. The heterotetramer interacts with DLAT, and is part of the multimeric pyruvate dehydrogenase complex that contains multiple copies of pyruvate dehydrogenase (E1), dihydrolipoamide acetyltransferase (DLAT, E2) and lipoamide dehydrogenase (DLD, E3). These subunits are bound to an inner core composed of about 48 DLAT and 12 PDHX molecules. It depends on thiamine diphosphate as a cofactor. The cofactor is Mg(2+). Phosphorylation at Ser-231, Ser-292 and Ser-299 by PDK family kinases inactivates the enzyme; for this phosphorylation at a single site is sufficient. Phosphorylation at Ser-292 interferes with access to active site, and thereby inactivates the enzyme. Dephosphorylation at all three sites, i.e. at Ser-231, Ser-292 and Ser-299, is required for reactivation. Post-translationally, acetylation alters the phosphorylation pattern. Deacetylated by SIRT3.

The protein resides in the mitochondrion matrix. It catalyses the reaction N(6)-[(R)-lipoyl]-L-lysyl-[protein] + pyruvate + H(+) = N(6)-[(R)-S(8)-acetyldihydrolipoyl]-L-lysyl-[protein] + CO2. Pyruvate dehydrogenase activity is inhibited by phosphorylation of PDHA1; it is reactivated by dephosphorylation. In terms of biological role, the pyruvate dehydrogenase complex catalyzes the overall conversion of pyruvate to acetyl-CoA and CO(2), and thereby links the glycolytic pathway to the tricarboxylic cycle. The polypeptide is Pyruvate dehydrogenase E1 component subunit alpha, somatic form, mitochondrial (PDHA1) (Sus scrofa (Pig)).